Consider the following 616-residue polypeptide: Polypeptide N-acetylgalactosaminyltransferase 3 (616 aa).

The chain crosses the membrane as a helical; Signal-anchor for type II membrane protein span at residues 13-33 (FFHWKLWKFSIIVFVFLVFLF). Positions 182–291 (LPTTSIIIVF…YGWLEPLLAR (110 aa)) are catalytic subdomain A. Residues D275, H277, and H413 each contribute to the Mn(2+) site. A catalytic subdomain B region spans residues 354-416 (PIRTPTFAGG…PCSVVGHVFR (63 aa)). N482 carries N-linked (GlcNAc...) asparagine glycosylation. The region spanning 512 to 616 (NRMCLDVGEN…FQKWIFGQND (105 aa)) is the Ricin B-type lectin domain. C515 and C533 are disulfide-bonded. UDP-N-acetyl-alpha-D-galactosamine is bound by residues D517, E520, H534, and N539. Cysteines 588 and 601 form a disulfide.

It belongs to the glycosyltransferase 2 family. GalNAc-T subfamily. Mn(2+) is required as a cofactor.

Its subcellular location is the golgi apparatus. It is found in the golgi stack membrane. It catalyses the reaction L-seryl-[protein] + UDP-N-acetyl-alpha-D-galactosamine = a 3-O-[N-acetyl-alpha-D-galactosaminyl]-L-seryl-[protein] + UDP + H(+). It carries out the reaction L-threonyl-[protein] + UDP-N-acetyl-alpha-D-galactosamine = a 3-O-[N-acetyl-alpha-D-galactosaminyl]-L-threonyl-[protein] + UDP + H(+). It participates in protein modification; protein glycosylation. Catalyzes the initial reaction in O-linked oligosaccharide biosynthesis, the transfer of an N-acetyl-D-galactosamine residue to a serine or threonine residue on the protein receptor. Glycosylates FGF23. In Taeniopygia guttata (Zebra finch), this protein is Polypeptide N-acetylgalactosaminyltransferase 3 (GALNT3).